A 707-amino-acid chain; its full sequence is E3 ubiquitin-protein ligase Praja-2 (707 aa).

The span at Met1–Ser10 shows a compositional bias: basic and acidic residues. Disordered regions lie at residues Met1–Arg23, Asn75–Ala120, and Ala242–Gly290. Position 2 is an N-acetylserine (Ser2). A compositionally biased stretch (polar residues) spans Leu109–Val119. A compositionally biased stretch (basic and acidic residues) spans Glu246–Arg276. Residues Ser306 and Ser320 each carry the phosphoserine modification. Ser339 is modified (phosphoserine; by PKA). Disordered stretches follow at residues Val380–Glu403 and Glu424–Leu493. The segment covering Thr381–Thr391 has biased composition (basic and acidic residues). Ser430 is subject to Phosphoserine. Positions Asn465–Gln481 are enriched in acidic residues. The segment covering Glu482–Thr491 has biased composition (polar residues). The interaction with PRKAR1A, PRKAR2A and PRKAR2B stretch occupies residues Asp530–Pro707. The interval Trp549–Asp569 is mediates interaction with TBC1D31. The RING-type; atypical zinc-finger motif lies at Cys633–Arg674. The interval Ala686 to Pro707 is disordered.

As to quaternary structure, binds ubiquitin-conjugating enzymes (E2s). In vitro, interacts with the ubiquitin-conjugating enzyme, UBE2D2. The phosphorylated form interacts with PRKAR1A, PRKAR2A and PRKAR2B. Binds the catalytic subunits of cAMP-dependent protein kinase. Interacts with MFHAS1. Interacts with TBC1D31; the interaction is direct and recruits PJA2 to centrosomes. As to expression, highly expressed in the brain, in nerve cells but not in glial cells. Abundantly expressed in pyramidal neurons and in the CA3 region of apical dendrites. Colocalizes with PRKAR2B in dentate granule cells and at postsynaptic sites of primary hippocampal neurons.

The protein localises to the cytoplasm. It localises to the cell membrane. It is found in the endoplasmic reticulum membrane. Its subcellular location is the golgi apparatus membrane. The protein resides in the synapse. The protein localises to the postsynaptic density. It localises to the cytoskeleton. It is found in the microtubule organizing center. Its subcellular location is the centrosome. It carries out the reaction S-ubiquitinyl-[E2 ubiquitin-conjugating enzyme]-L-cysteine + [acceptor protein]-L-lysine = [E2 ubiquitin-conjugating enzyme]-L-cysteine + N(6)-ubiquitinyl-[acceptor protein]-L-lysine.. It participates in protein modification; protein ubiquitination. In terms of biological role, has E2-dependent E3 ubiquitin-protein ligase activity. Responsible for ubiquitination of cAMP-dependent protein kinase type I and type II-alpha/beta regulatory subunits and for targeting them for proteasomal degradation. Essential for PKA-mediated long-term memory processes. Through the ubiquitination of MFHAS1, positively regulates the TLR2 signaling pathway that leads to the activation of the downstream p38 and JNK MAP kinases and promotes the polarization of macrophages toward the pro-inflammatory M1 phenotype. Plays a role in ciliogenesis by ubiquitinating OFD1. This chain is E3 ubiquitin-protein ligase Praja-2 (Pja2), found in Rattus norvegicus (Rat).